Here is a 716-residue protein sequence, read N- to C-terminus: DNA replication licensing factor MCM7 (716 aa).

The C4-type zinc finger occupies 178–205 (CEDCGHEIYQEVTSRVFMPLFKCPSSRC). Positions 326–531 (IYNKLSRSLA…MDSDLELAKH (206 aa)) constitute an MCM domain. 376 to 383 (GDPGVAKS) is an ATP binding site. Positions 508-511 (SRFD) match the Arginine finger motif.

The protein belongs to the MCM family. Component of the minichromosome maintenance (MCM) complex, a heterotetramer composed of MCM2, MCM3, MCM4, MCM5, MCM6 and MCM7. Interacts with ETG1. Expressed in shoot apex and flower buds.

It localises to the nucleus. Its subcellular location is the cytoplasm. The enzyme catalyses ATP + H2O = ADP + phosphate + H(+). Probable component of the MCM2-7 complex (MCM complex) that may function as a DNA helicase and which is essential to undergo a single round of replication initiation and elongation per cell cycle in eukaryotic cells. Required for megagametophyte and embryo development. This Arabidopsis thaliana (Mouse-ear cress) protein is DNA replication licensing factor MCM7 (MCM7).